Here is a 65-residue protein sequence, read N- to C-terminus: UPF0337 protein gbs1203 (65 aa).

Positions 1–12 (MSEEKFDAKVDK) are enriched in basic and acidic residues. Residues 1 to 29 (MSEEKFDAKVDKVSGSVKESVGKLTGDKE) form a disordered region.

The protein belongs to the UPF0337 (CsbD) family.

This chain is UPF0337 protein gbs1203, found in Streptococcus agalactiae serotype III (strain NEM316).